The primary structure comprises 139 residues: Ribosome maturation factor RimP (139 aa).

The protein belongs to the RimP family.

The protein resides in the cytoplasm. In terms of biological role, required for maturation of 30S ribosomal subunits. This chain is Ribosome maturation factor RimP, found in Syntrophomonas wolfei subsp. wolfei (strain DSM 2245B / Goettingen).